The chain runs to 408 residues: S-adenosylmethionine synthase (408 aa).

Residue His-15 coordinates ATP. Residue Asp-17 coordinates Mg(2+). A K(+)-binding site is contributed by Glu-43. 2 residues coordinate L-methionine: Glu-56 and Gln-100. The tract at residues 100–110 is flexible loop; the sequence is QSPDIAQGVNE. ATP-binding positions include 171–173, 248–249, Asp-257, 263–264, Ala-280, and Lys-284; these read DGK, KF, and RK. Asp-257 serves as a coordination point for L-methionine. Lys-288 lines the L-methionine pocket.

The protein belongs to the AdoMet synthase family. As to quaternary structure, homotetramer; dimer of dimers. Mg(2+) serves as cofactor. It depends on K(+) as a cofactor.

It localises to the cytoplasm. It catalyses the reaction L-methionine + ATP + H2O = S-adenosyl-L-methionine + phosphate + diphosphate. Its pathway is amino-acid biosynthesis; S-adenosyl-L-methionine biosynthesis; S-adenosyl-L-methionine from L-methionine: step 1/1. In terms of biological role, catalyzes the formation of S-adenosylmethionine (AdoMet) from methionine and ATP. The overall synthetic reaction is composed of two sequential steps, AdoMet formation and the subsequent tripolyphosphate hydrolysis which occurs prior to release of AdoMet from the enzyme. In Synechococcus sp. (strain CC9902), this protein is S-adenosylmethionine synthase.